Here is a 270-residue protein sequence, read N- to C-terminus: Putative [LysW]-aminoadipate/[LysW]-glutamate kinase (270 aa).

Residues 42 to 43 (GG), Arg69, and Asn177 contribute to the substrate site.

It belongs to the acetylglutamate kinase family. LysZ subfamily.

The protein localises to the cytoplasm. The enzyme catalyses [amino-group carrier protein]-C-terminal-N-(1,4-dicarboxybutan-1-yl)-L-glutamine + ATP = [amino-group carrier protein]-C-terminal-N-(1-carboxy-5-phosphooxy-5-oxopentan-1-yl)-L-glutamine + ADP. The catalysed reaction is [amino-group carrier protein]-C-terminal-gamma-(L-glutamyl)-L-glutamate + ATP = [amino-group carrier protein]-C-terminal-gamma-(5-phospho-L-glutamyl)-L-glutamate + ADP. The protein operates within amino-acid biosynthesis; L-lysine biosynthesis via AAA pathway; L-lysine from L-alpha-aminoadipate (Thermus route): step 2/5. Its pathway is amino-acid biosynthesis; L-arginine biosynthesis. Involved in both the arginine and lysine biosynthetic pathways. Phosphorylates the LysW-bound precursors glutamate (for arginine biosynthesis), respectively alpha-aminoadipate (for lysine biosynthesis). This is Putative [LysW]-aminoadipate/[LysW]-glutamate kinase from Aeropyrum pernix (strain ATCC 700893 / DSM 11879 / JCM 9820 / NBRC 100138 / K1).